The chain runs to 256 residues: UPF0246 protein HRM2_41860 (256 aa).

This sequence belongs to the UPF0246 family.

This is UPF0246 protein HRM2_41860 from Desulforapulum autotrophicum (strain ATCC 43914 / DSM 3382 / VKM B-1955 / HRM2) (Desulfobacterium autotrophicum).